The sequence spans 442 residues: Phosphoglucosamine mutase (442 aa).

The active-site Phosphoserine intermediate is serine 98. Residues serine 98, aspartate 236, aspartate 238, and aspartate 240 each contribute to the Mg(2+) site. Position 98 is a phosphoserine (serine 98).

Belongs to the phosphohexose mutase family. Requires Mg(2+) as cofactor. In terms of processing, activated by phosphorylation.

It catalyses the reaction alpha-D-glucosamine 1-phosphate = D-glucosamine 6-phosphate. Its function is as follows. Catalyzes the conversion of glucosamine-6-phosphate to glucosamine-1-phosphate. The sequence is that of Phosphoglucosamine mutase from Natranaerobius thermophilus (strain ATCC BAA-1301 / DSM 18059 / JW/NM-WN-LF).